Consider the following 395-residue polypeptide: 1-deoxy-D-xylulose 5-phosphate reductoisomerase (395 aa).

Residues Thr10, Gly11, Ser12, Ile13, Asn38, and Asn123 each coordinate NADPH. Position 124 (Lys124) interacts with 1-deoxy-D-xylulose 5-phosphate. Glu125 serves as a coordination point for NADPH. A Mn(2+)-binding site is contributed by Asp149. Ser150, Glu151, Ser185, and His208 together coordinate 1-deoxy-D-xylulose 5-phosphate. Glu151 serves as a coordination point for Mn(2+). Gly214 lines the NADPH pocket. 1-deoxy-D-xylulose 5-phosphate is bound by residues Ser221, Asn226, Lys227, and Glu230. Glu230 is a binding site for Mn(2+).

Belongs to the DXR family. The cofactor is Mg(2+). Mn(2+) is required as a cofactor.

It catalyses the reaction 2-C-methyl-D-erythritol 4-phosphate + NADP(+) = 1-deoxy-D-xylulose 5-phosphate + NADPH + H(+). Its pathway is isoprenoid biosynthesis; isopentenyl diphosphate biosynthesis via DXP pathway; isopentenyl diphosphate from 1-deoxy-D-xylulose 5-phosphate: step 1/6. Catalyzes the NADPH-dependent rearrangement and reduction of 1-deoxy-D-xylulose-5-phosphate (DXP) to 2-C-methyl-D-erythritol 4-phosphate (MEP). This Shewanella woodyi (strain ATCC 51908 / MS32) protein is 1-deoxy-D-xylulose 5-phosphate reductoisomerase.